Reading from the N-terminus, the 142-residue chain is Large ribosomal subunit protein uL13 (142 aa).

This sequence belongs to the universal ribosomal protein uL13 family. Part of the 50S ribosomal subunit.

In terms of biological role, this protein is one of the early assembly proteins of the 50S ribosomal subunit, although it is not seen to bind rRNA by itself. It is important during the early stages of 50S assembly. The polypeptide is Large ribosomal subunit protein uL13 (Shewanella baltica (strain OS185)).